The following is a 108-amino-acid chain: MSKKLIALCACPMGLAHTFMAAQVLEEAAVEAGYEVKIETQGADGIQNRLTAQDIAEATIIIHSVAVTPEDNERFESRDVYEITLQDAIKNAAGIIKEIEEMIASEQQ.

A PTS EIIB type-2 domain is found at 1–101 (MSKKLIALCA…AAGIIKEIEE (101 aa)). The active-site Phosphocysteine intermediate is the C11. C11 is modified (phosphocysteine; by EIIA).

Its subcellular location is the cytoplasm. It catalyses the reaction D-fructose(out) + N(pros)-phospho-L-histidyl-[protein] = D-fructose 1-phosphate(in) + L-histidyl-[protein]. The phosphoenolpyruvate-dependent sugar phosphotransferase system (sugar PTS), a major carbohydrate active transport system, catalyzes the phosphorylation of incoming sugar substrates concomitantly with their translocation across the cell membrane. The enzyme II FryABC PTS system is involved in fructose transport. In Shigella flexneri, this protein is PTS system fructose-like EIIB component 1 (fryB).